Consider the following 354-residue polypeptide: Uroporphyrinogen decarboxylase (354 aa).

Substrate-binding positions include 30-34 (RQAGR), Asp79, Tyr154, Ser209, and His333.

It belongs to the uroporphyrinogen decarboxylase family. Homodimer.

It localises to the cytoplasm. The enzyme catalyses uroporphyrinogen III + 4 H(+) = coproporphyrinogen III + 4 CO2. It participates in porphyrin-containing compound metabolism; protoporphyrin-IX biosynthesis; coproporphyrinogen-III from 5-aminolevulinate: step 4/4. In terms of biological role, catalyzes the decarboxylation of four acetate groups of uroporphyrinogen-III to yield coproporphyrinogen-III. The polypeptide is Uroporphyrinogen decarboxylase (Mycolicibacterium vanbaalenii (strain DSM 7251 / JCM 13017 / BCRC 16820 / KCTC 9966 / NRRL B-24157 / PYR-1) (Mycobacterium vanbaalenii)).